Here is a 244-residue protein sequence, read N- to C-terminus: Phosphoadenosine 5'-phosphosulfate reductase (244 aa).

The active-site Nucleophile; cysteine thiosulfonate intermediate is the C239.

The protein belongs to the PAPS reductase family. CysH subfamily.

It localises to the cytoplasm. It carries out the reaction [thioredoxin]-disulfide + sulfite + adenosine 3',5'-bisphosphate + 2 H(+) = [thioredoxin]-dithiol + 3'-phosphoadenylyl sulfate. Its pathway is sulfur metabolism; hydrogen sulfide biosynthesis; sulfite from sulfate: step 3/3. Catalyzes the formation of sulfite from phosphoadenosine 5'-phosphosulfate (PAPS) using thioredoxin as an electron donor. The polypeptide is Phosphoadenosine 5'-phosphosulfate reductase (Salmonella paratyphi A (strain AKU_12601)).